Here is a 645-residue protein sequence, read N- to C-terminus: Cysteine-rich receptor-like protein kinase 19 (645 aa).

Residues 1–20 form the signal peptide; sequence MSSLISFIFLFLFSSITASA. At 21–262 the chain is on the extracellular side; the sequence is QNTFYLYHNC…PRPGKGGNSS (242 aa). Gnk2-homologous domains are found at residues 24–129 and 135–239; these read FYLY…NRNI and TDGG…NYAF. Residues N29, N39, N57, N101, N185, N241, and N260 are each glycosylated (N-linked (GlcNAc...) asparagine). Residues 263–283 traverse the membrane as a helical segment; the sequence is VIIIAVVVPITVLFLLLVAVF. Residues 284–645 are Cytoplasmic-facing; the sequence is SVRAKNKRTL…EASITRVTPR (362 aa). The Protein kinase domain occupies 326 to 603; it reads FLPINKLGQG…IVQMLTTSLI (278 aa). Residues 332 to 340 and K354 contribute to the ATP site; that span reads LGQGGFGEV. Y399 is subject to Phosphotyrosine. Catalysis depends on D451, which acts as the Proton acceptor. T491 carries the post-translational modification Phosphothreonine. Y499 is subject to Phosphotyrosine. The segment at 616-645 is disordered; sequence RSKQEQAGPSIDSSTHCSVDEASITRVTPR. A compositionally biased stretch (polar residues) spans 620–632; sequence EQAGPSIDSSTHC.

It belongs to the protein kinase superfamily. Ser/Thr protein kinase family. CRK subfamily. In terms of assembly, interacts with MWL1.

The protein localises to the membrane. It carries out the reaction L-seryl-[protein] + ATP = O-phospho-L-seryl-[protein] + ADP + H(+). The catalysed reaction is L-threonyl-[protein] + ATP = O-phospho-L-threonyl-[protein] + ADP + H(+). In Arabidopsis thaliana (Mouse-ear cress), this protein is Cysteine-rich receptor-like protein kinase 19 (CRK19).